The chain runs to 2364 residues: Cytotoxin-L (2364 aa).

The four-helical bundle stretch occupies residues 1 to 91 (MSLVNKAQLQ…EVLELKNNSL (91 aa)). The 373-residue stretch at 96–468 (KNLHFIWIGG…APDVRSTINL (373 aa)) folds into the GT44 domain. Residues 96 to 468 (KNLHFIWIGG…APDVRSTINL (373 aa)) form a glucosyltransferase region region. UDP-alpha-D-glucose contacts are provided by residues 101 to 103 (IWI), Asn-139, 265 to 270 (LAAASD), and 286 to 288 (DVD). Residues Asp-288, Glu-515, and Ser-518 each contribute to the Mg(2+) site. Residue 518–520 (SLW) participates in UDP-alpha-D-glucose binding. An autoprocessing region region spans residues 544–799 (GEDDILDFSQ…KSKNLHELST (256 aa)). Residues Glu-545 and Asp-546 each contribute to the Zn(2+) site. One can recognise a Peptidase C80 domain in the interval 567-774 (SSSMRTPNKE…EESIIKDISS (208 aa)). Residues Tyr-577, Lys-600, and Lys-647 each contribute to the 1D-myo-inositol hexakisphosphate site. His-653 contributes to the Zn(2+) binding site. The For protease activity role is filled by His-653. The active-site Nucleophile; for protease activity is Cys-698. Residue His-757 participates in Zn(2+) binding. Residues Lys-764, Lys-775, and Lys-792 each coordinate 1D-myo-inositol hexakisphosphate. Positions 800-1500 (LLQEIKNNSN…ESIIRNIYMP (701 aa)) are translocation region. Interaction with host SEMA6A and SEMA6B regions lie at residues 1433-1438 (CIKLIE), 1466-1471 (DNETKY), 1484-1495 (FTAEFSNESIIR), 1504-1511 (NLFIYSSK), and 1596-1601 (YNNLDP). 19 Cell wall-binding repeats span residues 1833–1852 (VSGL…PKNN), 1854–1873 (ITGF…TKSG), 1876–1895 (SIGE…QGIL), 1926–1945 (FIGK…NYRA), 1946–1965 (AVEW…KTGE), 1967–1986 (LKGL…NGIM), 1987–2006 (QTGF…DGVM), 2007–2026 (QVGY…NGER), 2057–2076 (YNGI…SNTA), 2077–2097 (VVGW…NTAE), 2099–2118 (CIGL…NGIR), 2119–2138 (QLGF…SGKI), 2139–2158 (ELGY…SGLV), 2209–2224 (ETGW…YFDP), 2227–2249 (KKAY…NGIM), 2250–2269 (KTGL…DGKM), 2270–2289 (QFGY…DGKM), 2320–2339 (YTGW…EYIA), and 2340–2359 (ATSS…DTAE). Residues 1835–2364 (GLIYINDSLY…PDTAELVVSE (530 aa)) are receptor-binding (CROPS) region.

Belongs to the clostridial glucosylating toxin (LCGT) family. Homomultimer; forms an inactive homomultimer at pH 8, which dissociates at pH 4, leading to cytotoxicity. Interacts with host SEMA6A; interaction promotes toxin entry into host cell. Interacts with host SEMA6B; interaction promotes toxin entry into host cell. Zn(2+) serves as cofactor. The cofactor is Mn(2+). Mg(2+) is required as a cofactor. Undergoes autocatalytic cleavage to release the N-terminal part (Glucosyltransferase TcsL), which constitutes the active part of the toxin, in the host cytosol. 1D-myo-inositol hexakisphosphate-binding (InsP6) activates the peptidase C80 domain and promotes autoprocessing.

It localises to the secreted. It is found in the host endosome membrane. Its subcellular location is the host cytoplasm. The protein resides in the host cytosol. The protein localises to the host cell membrane. The catalysed reaction is L-threonyl-[protein] + UDP-alpha-D-glucose = 3-O-(alpha-D-glucosyl)-L-threonyl-[protein] + UDP + H(+). Protease activity is activated upon binding to 1D-myo-inositol hexakisphosphate (InsP6), which induces conformational reorganization. Precursor of a cytotoxin that targets the vascular endothelium, inducing an anti-inflammatory effect and resulting in lethal toxic shock syndrome. TcsL constitutes the main toxin that mediates the pathology of P.sordellii infection, an anaerobic Gram-positive bacterium found in soil and in the gastrointestinal and vaginal tracts of animals and humans; although the majority of carriers are asymptomatic, pathogenic P.sordellii infections arise rapidly and are highly lethal. This form constitutes the precursor of the toxin: it enters into host cells and mediates autoprocessing to release the active toxin (Glucosyltransferase TcsL) into the host cytosol. Targets vascular endothelium by binding to the semaphorin proteins SEMA6A and SEMA6B, and enters host cells via clathrin-mediated endocytosis. Once entered into host cells, acidification in the endosome promotes the membrane insertion of the translocation region and formation of a pore, leading to translocation of the GT44 and peptidase C80 domains across the endosomal membrane. This activates the peptidase C80 domain and autocatalytic processing, releasing the N-terminal part (Glucosyltransferase TcsL), which constitutes the active part of the toxin, in the cytosol. In terms of biological role, active form of the toxin, which is released into the host cytosol following autoprocessing and inactivates small GTPases. Acts by mediating monoglucosylation of small GTPases of the Ras (H-Ras/HRAS, K-Ras/KRAS and N-Ras/NRAS) family in host cells at the conserved threonine residue located in the switch I region ('Thr-37/35'), using UDP-alpha-D-glucose as the sugar donor. Does not catalyze monoglucosylation of Ral/RALA. Also able to catalyze monoglucosylation of some members of the Rho family (Rac1 and Rap2A), but with less efficiency than with Ras proteins. Monoglucosylation of host small GTPases completely prevents the recognition of the downstream effector, blocking the GTPases in their inactive form and leading to apoptosis. Induces an anti-inflammatory effect, mainly by inactivating Ras proteins which results in blockage of the cell cycle and killing of immune cells. The absence or moderate local inflammatory response allows C.sordellii spreading in deep tissues, production of toxin which is released in the general circulation and causes a toxic shock syndrome. This is Cytotoxin-L from Paraclostridium sordellii (Clostridium sordellii).